Reading from the N-terminus, the 120-residue chain is Immunoglobulin lambda variable 2-14 (120 aa).

The first 19 residues, 1-19 (MAWALLLLTLLTQGTGSWA), serve as a signal peptide directing secretion. Q20 is subject to Pyrrolidone carboxylic acid. Residues 20–44 (QSALTQPASVSGSPGQSITISCTGT) are framework-1. Residues 20-119 (QSALTQPASV…SSYTSSSTLH (100 aa)) form the Ig-like domain. A disulfide bridge links C41 with C109. The interval 45 to 53 (SSDVGGYNY) is complementarity-determining-1. Positions 54-70 (VSWYQQHPGKAPKLMIY) are framework-2. The tract at residues 71-73 (EVS) is complementarity-determining-2. A framework-3 region spans residues 74–109 (NRPSGVSNRFSGSKSGNTASLTISGLQAEDEADYYC). A complementarity-determining-3 region spans residues 110-119 (SSYTSSSTLH).

Immunoglobulins are composed of two identical heavy chains and two identical light chains; disulfide-linked.

The protein resides in the secreted. The protein localises to the cell membrane. Its function is as follows. V region of the variable domain of immunoglobulin light chains that participates in the antigen recognition. Immunoglobulins, also known as antibodies, are membrane-bound or secreted glycoproteins produced by B lymphocytes. In the recognition phase of humoral immunity, the membrane-bound immunoglobulins serve as receptors which, upon binding of a specific antigen, trigger the clonal expansion and differentiation of B lymphocytes into immunoglobulins-secreting plasma cells. Secreted immunoglobulins mediate the effector phase of humoral immunity, which results in the elimination of bound antigens. The antigen binding site is formed by the variable domain of one heavy chain, together with that of its associated light chain. Thus, each immunoglobulin has two antigen binding sites with remarkable affinity for a particular antigen. The variable domains are assembled by a process called V-(D)-J rearrangement and can then be subjected to somatic hypermutations which, after exposure to antigen and selection, allow affinity maturation for a particular antigen. The protein is Immunoglobulin lambda variable 2-14 of Homo sapiens (Human).